The primary structure comprises 156 residues: Small ribosomal subunit protein uS7 (156 aa).

This sequence belongs to the universal ribosomal protein uS7 family. As to quaternary structure, part of the 30S ribosomal subunit. Contacts proteins S9 and S11.

Its function is as follows. One of the primary rRNA binding proteins, it binds directly to 16S rRNA where it nucleates assembly of the head domain of the 30S subunit. Is located at the subunit interface close to the decoding center, probably blocks exit of the E-site tRNA. The protein is Small ribosomal subunit protein uS7 of Synechococcus sp. (strain CC9605).